We begin with the raw amino-acid sequence, 476 residues long: Bifunctional protein HldE (476 aa).

The tract at residues 1–319 (MKVSLPAFEK…EALALHHGES (319 aa)) is ribokinase. Position 195 to 198 (195 to 198 (NMSE)) interacts with ATP. Residue Asp-264 is part of the active site. Positions 345–476 (MTNGCFDILH…AIIQNIMANQ (132 aa)) are cytidylyltransferase.

This sequence in the N-terminal section; belongs to the carbohydrate kinase PfkB family. The protein in the C-terminal section; belongs to the cytidylyltransferase family. In terms of assembly, homodimer.

The catalysed reaction is D-glycero-beta-D-manno-heptose 7-phosphate + ATP = D-glycero-beta-D-manno-heptose 1,7-bisphosphate + ADP + H(+). It catalyses the reaction D-glycero-beta-D-manno-heptose 1-phosphate + ATP + H(+) = ADP-D-glycero-beta-D-manno-heptose + diphosphate. Its pathway is nucleotide-sugar biosynthesis; ADP-L-glycero-beta-D-manno-heptose biosynthesis; ADP-L-glycero-beta-D-manno-heptose from D-glycero-beta-D-manno-heptose 7-phosphate: step 1/4. It participates in nucleotide-sugar biosynthesis; ADP-L-glycero-beta-D-manno-heptose biosynthesis; ADP-L-glycero-beta-D-manno-heptose from D-glycero-beta-D-manno-heptose 7-phosphate: step 3/4. Functionally, catalyzes the phosphorylation of D-glycero-D-manno-heptose 7-phosphate at the C-1 position to selectively form D-glycero-beta-D-manno-heptose-1,7-bisphosphate. In terms of biological role, catalyzes the ADP transfer from ATP to D-glycero-beta-D-manno-heptose 1-phosphate, yielding ADP-D-glycero-beta-D-manno-heptose. The chain is Bifunctional protein HldE from Shewanella baltica (strain OS155 / ATCC BAA-1091).